The chain runs to 108 residues: Monothiol bacilliredoxin BrxC (108 aa).

C31 is subject to S-bacillithiol cysteine disulfide.

As to quaternary structure, interacts with AbrB, BdhA, Bdr, BrxB, FolD, GapA, GapB, GatA, PfkA, PyrAA, PyrAB, PyrE, PyrG, PyrH, RpsB, RpsK, RpsL, SalA, SucC, Tuf and YtsJ. Post-translationally, cys can react with bacillithiol (BSH) to form mixed disulfides. S-bacillithiolation protects Cys residues against overoxidation by acting as a redox switch in response to oxidative stress.

In terms of biological role, S-bacillithiolation is the formation of mixed disulfide bonds between protein thiols and the general thiol reductant bacillithiol (BSH) under oxidative stress. BSH is an equivalent of glutathione (GSH) in Firmicutes. This protein is a monothiol bacilliredoxin, which debacillithiolates (removes BSH) the S-bacillithiolated glyceraldehyde-3-phosphate dehydrogenases (GAPDHs) GapA and GapB in vivo and probably a number of other oxidized cytosolic proteins. Debacillithiolates the S-bacillithiolated Bdr (Bdr-SSB) and BrxB (BrxB-SSB) in vitro. Involved in maintaining redox homeostasis in response to disulfide stress conditions. This is Monothiol bacilliredoxin BrxC from Bacillus subtilis (strain 168).